The primary structure comprises 324 residues: Methionyl-tRNA formyltransferase (324 aa).

(6S)-5,6,7,8-tetrahydrofolate is bound at residue 112-115; sequence SILP.

It belongs to the Fmt family.

The catalysed reaction is L-methionyl-tRNA(fMet) + (6R)-10-formyltetrahydrofolate = N-formyl-L-methionyl-tRNA(fMet) + (6S)-5,6,7,8-tetrahydrofolate + H(+). Attaches a formyl group to the free amino group of methionyl-tRNA(fMet). The formyl group appears to play a dual role in the initiator identity of N-formylmethionyl-tRNA by promoting its recognition by IF2 and preventing the misappropriation of this tRNA by the elongation apparatus. In Shewanella loihica (strain ATCC BAA-1088 / PV-4), this protein is Methionyl-tRNA formyltransferase.